We begin with the raw amino-acid sequence, 73 residues long: UPF0346 protein lp_1865 (73 aa).

It belongs to the UPF0346 family.

In Lactiplantibacillus plantarum (strain ATCC BAA-793 / NCIMB 8826 / WCFS1) (Lactobacillus plantarum), this protein is UPF0346 protein lp_1865.